The following is a 481-amino-acid chain: Arylsulfatase (481 aa).

Asp11, Gln12, and Cys51 together coordinate Ca(2+). The active-site Nucleophile is Cys51. At Cys51 the chain carries 3-oxoalanine (Cys). His102 is an active-site residue. Residues Asp302 and His303 each coordinate Ca(2+).

Belongs to the sulfatase family. Ca(2+) serves as cofactor. Post-translationally, the conversion to 3-oxoalanine (also known as C-formylglycine, FGly), of a serine or cysteine residue in prokaryotes and of a cysteine residue in eukaryotes, is critical for catalytic activity.

The catalysed reaction is an aryl sulfate + H2O = a phenol + sulfate + H(+). Functionally, has sulfatase activity toward para-nitrophenyl sulfate, which is increased in presence of calcium ion. The protein is Arylsulfatase of Clostridium perfringens (strain 13 / Type A).